The primary structure comprises 144 residues: Large ribosomal subunit protein uL15 (144 aa).

The tract at residues 1-54 (MRLNTLSPAEGSKKAGKRLGRGIGSGLGKTGGRGHKGQKSRSGGGVRRGFEGGQ) is disordered. Over residues 21 to 31 (RGIGSGLGKTG) the composition is skewed to gly residues.

This sequence belongs to the universal ribosomal protein uL15 family. In terms of assembly, part of the 50S ribosomal subunit.

In terms of biological role, binds to the 23S rRNA. The polypeptide is Large ribosomal subunit protein uL15 (Salmonella arizonae (strain ATCC BAA-731 / CDC346-86 / RSK2980)).